The primary structure comprises 362 residues: Probable RNA methyltransferase Tbd_1951 (362 aa).

Glu-89 (proton acceptor) is an active-site residue. The Radical SAM core domain maps to 92-318 (LLPRDGVCVS…AKLRHSAGQD (227 aa)). An intrachain disulfide couples Cys-99 to Cys-323. [4Fe-4S] cluster is bound by residues Cys-106, Cys-110, and Cys-113. Residues 151 to 152 (GE), Ser-181, 204 to 206 (SLH), and Asn-280 contribute to the S-adenosyl-L-methionine site. Cys-323 (S-methylcysteine intermediate) is an active-site residue. A disordered region spans residues 342-362 (LPSAETPAASPKAAASIGFPG). Positions 343 to 362 (PSAETPAASPKAAASIGFPG) are enriched in low complexity.

The protein belongs to the radical SAM superfamily. RlmN family. The cofactor is [4Fe-4S] cluster.

It is found in the cytoplasm. This Thiobacillus denitrificans (strain ATCC 25259 / T1) protein is Probable RNA methyltransferase Tbd_1951.